Reading from the N-terminus, the 603-residue chain is UvrABC system protein C (603 aa).

The 78-residue stretch at 15 to 92 folds into the GIY-YIG domain; sequence DQPGCYLMKD…IKKHDPRFNI (78 aa). One can recognise a UVR domain in the interval 197 to 232; the sequence is KTVKNDLMKKMQEAAENMEFEKAGEFRDQINAIETT.

Belongs to the UvrC family. As to quaternary structure, interacts with UvrB in an incision complex.

It localises to the cytoplasm. Its function is as follows. The UvrABC repair system catalyzes the recognition and processing of DNA lesions. UvrC both incises the 5' and 3' sides of the lesion. The N-terminal half is responsible for the 3' incision and the C-terminal half is responsible for the 5' incision. This Listeria innocua serovar 6a (strain ATCC BAA-680 / CLIP 11262) protein is UvrABC system protein C.